A 160-amino-acid polypeptide reads, in one-letter code: Transcription elongation factor GreA (160 aa).

The stretch at 49 to 75 (SEYDEAKNDQAFTEGRIIQLENMLKNA) forms a coiled coil.

It belongs to the GreA/GreB family.

Functionally, necessary for efficient RNA polymerase transcription elongation past template-encoded arresting sites. The arresting sites in DNA have the property of trapping a certain fraction of elongating RNA polymerases that pass through, resulting in locked ternary complexes. Cleavage of the nascent transcript by cleavage factors such as GreA or GreB allows the resumption of elongation from the new 3'terminus. GreA releases sequences of 2 to 3 nucleotides. The polypeptide is Transcription elongation factor GreA (Clostridium beijerinckii (strain ATCC 51743 / NCIMB 8052) (Clostridium acetobutylicum)).